A 352-amino-acid polypeptide reads, in one-letter code: Phosphoribosylformylglycinamidine cyclo-ligase (352 aa).

The protein belongs to the AIR synthase family.

It localises to the cytoplasm. The catalysed reaction is 2-formamido-N(1)-(5-O-phospho-beta-D-ribosyl)acetamidine + ATP = 5-amino-1-(5-phospho-beta-D-ribosyl)imidazole + ADP + phosphate + H(+). The protein operates within purine metabolism; IMP biosynthesis via de novo pathway; 5-amino-1-(5-phospho-D-ribosyl)imidazole from N(2)-formyl-N(1)-(5-phospho-D-ribosyl)glycinamide: step 2/2. The chain is Phosphoribosylformylglycinamidine cyclo-ligase from Ectopseudomonas mendocina (strain ymp) (Pseudomonas mendocina).